The following is a 145-amino-acid chain: UPF0260 protein VS_0923 (145 aa).

This sequence belongs to the UPF0260 family.

The polypeptide is UPF0260 protein VS_0923 (Vibrio atlanticus (strain LGP32) (Vibrio splendidus (strain Mel32))).